Consider the following 740-residue polypeptide: Glycerol dehydrogenase large subunit (740 aa).

A signal peptide spans Met1–Ala29. Disordered stretches follow at residues Pro28 to Val105 and Leu442 to Val468. The segment covering Glu34–Gly43 has biased composition (low complexity). The segment covering Ser46 to Tyr58 has biased composition (polar residues).

This sequence belongs to the bacterial PQQ dehydrogenase family. The cofactor is pyrroloquinoline quinone.

The protein resides in the secreted. It carries out the reaction glycerol + A = dihydroxyacetone + AH2. Its function is as follows. Catalyzes the oxidation of glycerol to glycerone. Also acts, more slowly, on a number of other polyols including D-sorbitol, D-arabinitol, D-mannitol, meso-erythritol, adonitol and propylene glycol. The polypeptide is Glycerol dehydrogenase large subunit (sldA) (Gluconobacter thailandicus).